The following is a 334-amino-acid chain: MATIKDVARMAGVSTTTVSHVINKTRFVAEATQKKVLAAVDDLNYAPSAVARSLKCNTTKTIGMLVTKSTNPFFAEVIHGVEEYCYNAGYTLILCNTEGNLVKQRDYLRMLAEKRVDGLLVMCSDIDQDLLDLLARKSDLPMVIMDWGPESPLTDKIQDNAEQGGYVATKHFIDNGHEKIGCLSGHSEKSTCRERLKGFNKAMAEAGITVNNNWIIDGDFECESAVEAANQYIAMKDRPTAIFCFNDIMAMALISTFEQAGVRVPDDISVIGYDNIDLAPYFSPPLTTIHQPKRRLGKTAIEILMERVKDKNHERRVFEMNPELVIRKSVKDLN.

The HTH lacI-type domain occupies 2 to 56 (ATIKDVARMAGVSTTTVSHVINKTRFVAEATQKKVLAAVDDLNYAPSAVARSLKC). The segment at residues 4–23 (IKDVARMAGVSTTTVSHVIN) is a DNA-binding region (H-T-H motif). A DNA-binding region spans residues 48 to 56 (SAVARSLKC). The hypoxanthine site is built by phenylalanine 73, lysine 189, threonine 191, phenylalanine 220, and aspartate 274.

Homodimer.

The protein operates within purine metabolism; purine nucleotide biosynthesis [regulation]. In terms of biological role, is the main repressor of the genes involved in the de novo synthesis of purine nucleotides, regulating purB, purC, purEK, purF, purHD, purL, purMN and guaBA expression. PurR is allosterically activated to bind its cognate DNA by binding the purine corepressors, hypoxanthine or guanine, thereby effecting transcription repression. This chain is HTH-type transcriptional repressor PurR, found in Photobacterium profundum (strain SS9).